A 376-amino-acid chain; its full sequence is Phosphate acyltransferase (376 aa).

Positions 334–376 are disordered; that stretch reads AGSLEQAKRDAGGPGSASQMASPIAGPVSGQPAEPYSAQSSKA.

The protein belongs to the PlsX family. Homodimer. Probably interacts with PlsY.

The protein localises to the cytoplasm. It catalyses the reaction a fatty acyl-[ACP] + phosphate = an acyl phosphate + holo-[ACP]. It functions in the pathway lipid metabolism; phospholipid metabolism. Catalyzes the reversible formation of acyl-phosphate (acyl-PO(4)) from acyl-[acyl-carrier-protein] (acyl-ACP). This enzyme utilizes acyl-ACP as fatty acyl donor, but not acyl-CoA. The protein is Phosphate acyltransferase of Paraburkholderia phymatum (strain DSM 17167 / CIP 108236 / LMG 21445 / STM815) (Burkholderia phymatum).